We begin with the raw amino-acid sequence, 118 residues long: Cell division protein SepF (118 aa).

The tract at residues 1-12 (MGIMSKILGGGG) is important for localization in a ring-like structure at midcell.

Homodimer. Does not oligomerize. Interacts with FtsZ2.

It is found in the cytoplasm. In terms of biological role, involved in cell division. Probably acts as a membrane anchor for FstZ2, tethering its filaments to the division site. May be involved in septum closure. This is Cell division protein SepF from Haloferax volcanii (strain ATCC 29605 / DSM 3757 / JCM 8879 / NBRC 14742 / NCIMB 2012 / VKM B-1768 / DS2) (Halobacterium volcanii).